The chain runs to 457 residues: Putative transposase y4bF (457 aa).

Residues 128-313 (TFHQPRLRRE…RPLNLAPDRL (186 aa)) enclose the Integrase catalytic domain. Residues 406–440 (QDERPAPKVRTNSEKNGYTPRGRKPGKRTDFMNDP) are disordered.

The sequence is that of Putative transposase y4bF from Sinorhizobium fredii (strain NBRC 101917 / NGR234).